The sequence spans 320 residues: uncharacterized protein (320 aa).

The tract at residues 1–40 (MDHPSTSSLPRKKVKAGVKKAGKKTGKKTTGKKKTTPSAI) is disordered. The span at 10–35 (PRKKVKAGVKKAGKKTGKKTTGKKKT) shows a compositional bias: basic residues. A helical transmembrane segment spans residues 51–71 (LLVLLAVLSYLAALSLGLYIM). Residues Asn-92, Asn-122, Asn-154, and Asn-167 are each glycosylated (N-linked (GlcNAc...) asparagine). Transmembrane regions (helical) follow at residues 186-206 (PLVHLLLFFVTGIMLFVAMTG) and 216-236 (MLVTAIALSAFSLALALVTVL). A glycan (N-linked (GlcNAc...) asparagine) is linked at Asn-247. A helical transmembrane segment spans residues 272-292 (VQGALVAIVAVFYLTMGVVFV).

Its subcellular location is the membrane. The protein operates within secondary metabolite biosynthesis; terpenoid biosynthesis. Its function is as follows. Part of the gene cluster that mediates the biosynthesis of an ophiobolin family sesterterpenoid. This is an uncharacterized protein from Aspergillus terreus.